We begin with the raw amino-acid sequence, 559 residues long: Glucose-6-phosphate isomerase (559 aa).

Glu-363 (proton donor) is an active-site residue. Catalysis depends on residues His-394 and Lys-523.

This sequence belongs to the GPI family.

It localises to the cytoplasm. The catalysed reaction is alpha-D-glucose 6-phosphate = beta-D-fructose 6-phosphate. It functions in the pathway carbohydrate biosynthesis; gluconeogenesis. Its pathway is carbohydrate degradation; glycolysis; D-glyceraldehyde 3-phosphate and glycerone phosphate from D-glucose: step 2/4. Its function is as follows. Catalyzes the reversible isomerization of glucose-6-phosphate to fructose-6-phosphate. This is Glucose-6-phosphate isomerase from Bartonella henselae (strain ATCC 49882 / DSM 28221 / CCUG 30454 / Houston 1) (Rochalimaea henselae).